A 151-amino-acid chain; its full sequence is Deoxyuridine 5'-triphosphate nucleotidohydrolase (151 aa).

Residues 70 to 72, N83, 87 to 89, and M97 contribute to the substrate site; these read RSG and LID.

This sequence belongs to the dUTPase family. The cofactor is Mg(2+).

It catalyses the reaction dUTP + H2O = dUMP + diphosphate + H(+). Its pathway is pyrimidine metabolism; dUMP biosynthesis; dUMP from dCTP (dUTP route): step 2/2. In terms of biological role, this enzyme is involved in nucleotide metabolism: it produces dUMP, the immediate precursor of thymidine nucleotides and it decreases the intracellular concentration of dUTP so that uracil cannot be incorporated into DNA. The chain is Deoxyuridine 5'-triphosphate nucleotidohydrolase from Hamiltonella defensa subsp. Acyrthosiphon pisum (strain 5AT).